A 157-amino-acid chain; its full sequence is Putative pre-16S rRNA nuclease (157 aa).

This sequence belongs to the YqgF nuclease family.

It localises to the cytoplasm. Its function is as follows. Could be a nuclease involved in processing of the 5'-end of pre-16S rRNA. This Orientia tsutsugamushi (strain Ikeda) (Rickettsia tsutsugamushi) protein is Putative pre-16S rRNA nuclease.